The primary structure comprises 286 residues: Alpha-ketoglutarate-dependent dioxygenase alkB homolog 3 (286 aa).

The disordered stretch occupies residues methionine 1 to glutamate 46. Positions proline 17–alanine 38 are enriched in polar residues. Substrate-binding positions include tryptophan 115 and tyrosine 141–tyrosine 143. The Fe2OG dioxygenase domain occupies threonine 172 to tyrosine 278. Residue leucine 177 is modified to (4R)-5-hydroxyleucine; alternate. Residue leucine 177 is modified to (4R)-5-oxoleucine; alternate. Residue asparagine 179 to tyrosine 181 coordinates 2-oxoglutarate. Histidine 191 and aspartate 193 together coordinate Fe cation. Substrate is bound at residue aspartate 194. Histidine 257 provides a ligand contact to Fe cation. 2-oxoglutarate-binding positions include arginine 269 to arginine 275 and arginine 275.

It belongs to the alkB family. Interacts with the ASCC complex composed of ASCC1, ASCC2 and ASCC3. Interacts directly with ASCC3, and is thereby recruited to the ASCC complex. Interacts with OTUD4; the interaction is direct. Interacts with USP7 and USP9X. The cofactor is Fe(2+). In terms of processing, ubiquitinated; undergoes 'Lys-48'-linked polyubiquitination. OTUD4 promotes USP7 and USP9X-dependent deubiquitination of 'Lys-48'-polyubiquitinated ALKBH3 promoting the repair of alkylated DNA lesions. As to expression, detected in testis, kidney, liver and heart.

It localises to the nucleus. The protein localises to the cytoplasm. The catalysed reaction is an N(1)-methyladenosine in mRNA + 2-oxoglutarate + O2 = an adenosine in mRNA + formaldehyde + succinate + CO2. The enzyme catalyses a methylated nucleobase within DNA + 2-oxoglutarate + O2 = a nucleobase within DNA + formaldehyde + succinate + CO2. It catalyses the reaction an N(1)-methyl-2'-deoxyadenosine in single-stranded DNA + 2-oxoglutarate + O2 = a 2'-deoxyadenosine in single-stranded DNA + formaldehyde + succinate + CO2 + H(+). It carries out the reaction an N(3)-methyl-2'-deoxycytidine in single-stranded DNA + 2-oxoglutarate + O2 = a 2'-deoxycytidine in single-stranded DNA + formaldehyde + succinate + CO2 + H(+). The catalysed reaction is a 3,N(4)-etheno-2'-deoxycytidine in single-stranded DNA + 2-oxoglutarate + O2 + H2O = a 2'-deoxycytidine in single-stranded DNA + glyoxal + succinate + CO2. With respect to regulation, activated by ascorbate. Functionally, dioxygenase that mediates demethylation of DNA and RNA containing 1-methyladenosine (m1A). Repairs alkylated DNA containing 1-methyladenosine (m1A) and 3-methylcytosine (m3C) by oxidative demethylation. Has a strong preference for single-stranded DNA. Able to process alkylated m3C within double-stranded regions via its interaction with ASCC3, which promotes DNA unwinding to generate single-stranded substrate needed for ALKBH3. Can repair exocyclic 3,N4-ethenocytosine adducs in single-stranded DNA. Also acts on RNA. Demethylates N(1)-methyladenosine (m1A) RNA, an epigenetic internal modification of messenger RNAs (mRNAs) highly enriched within 5'-untranslated regions (UTRs) and in the vicinity of start codons. Requires molecular oxygen, alpha-ketoglutarate and iron. The chain is Alpha-ketoglutarate-dependent dioxygenase alkB homolog 3 from Mus musculus (Mouse).